Consider the following 49-residue polypeptide: Large ribosomal subunit protein bL33A (49 aa).

The protein belongs to the bacterial ribosomal protein bL33 family.

The chain is Large ribosomal subunit protein bL33A from Staphylococcus aureus (strain COL).